Reading from the N-terminus, the 245-residue chain is Small ribosomal subunit protein uS2 (245 aa).

It belongs to the universal ribosomal protein uS2 family.

This chain is Small ribosomal subunit protein uS2, found in Pseudomonas fluorescens (strain SBW25).